A 324-amino-acid polypeptide reads, in one-letter code: Coproporphyrin III ferrochelatase (324 aa).

2 residues coordinate Fe(2+): His-184 and Glu-266.

The protein belongs to the ferrochelatase family.

It localises to the cytoplasm. The catalysed reaction is Fe-coproporphyrin III + 2 H(+) = coproporphyrin III + Fe(2+). It functions in the pathway porphyrin-containing compound metabolism; protoheme biosynthesis. Functionally, involved in coproporphyrin-dependent heme b biosynthesis. Catalyzes the insertion of ferrous iron into coproporphyrin III to form Fe-coproporphyrin III. This chain is Coproporphyrin III ferrochelatase, found in Lactiplantibacillus plantarum (strain ATCC BAA-793 / NCIMB 8826 / WCFS1) (Lactobacillus plantarum).